Reading from the N-terminus, the 561-residue chain is Asparagine synthetase [glutamine-hydrolyzing] (561 aa).

The active-site For GATase activity is the Cys2. The region spanning 2–191 (CGIWALFGSD…PGHYEVLDLK (190 aa)) is the Glutamine amidotransferase type-2 domain. L-glutamine is bound by residues 49 to 53 (RLAVV), 75 to 77 (NGE), and Asp97. Residues 213 to 536 (HALYDNVEKL…PGRADWLSHY (324 aa)) form the Asparagine synthetase domain. ATP-binding positions include Leu256, Ile288, and 363 to 364 (SG). Position 385 is an N6-acetyllysine (Lys385). Position 545 is a phosphothreonine (Thr545). Ser557 carries the post-translational modification Phosphoserine.

The enzyme catalyses L-aspartate + L-glutamine + ATP + H2O = L-asparagine + L-glutamate + AMP + diphosphate + H(+). It participates in amino-acid biosynthesis; L-asparagine biosynthesis; L-asparagine from L-aspartate (L-Gln route): step 1/1. The chain is Asparagine synthetase [glutamine-hydrolyzing] (ASNS) from Pongo abelii (Sumatran orangutan).